The primary structure comprises 704 residues: Capsule polysaccharide modification protein LipA (704 aa).

It localises to the cell inner membrane. In terms of biological role, involved in the phospholipid modification of the capsular polysaccharide, a strong requirement for its translocation to the cell surface. This is Capsule polysaccharide modification protein LipA (lipA) from Neisseria meningitidis serogroup B (strain ATCC BAA-335 / MC58).